We begin with the raw amino-acid sequence, 217 residues long: uncharacterized protein (217 aa).

This is an uncharacterized protein from Escherichia coli.